A 301-amino-acid chain; its full sequence is Aspartate carbamoyltransferase catalytic subunit (301 aa).

Carbamoyl phosphate is bound by residues Arg-54 and Thr-55. Lys-82 provides a ligand contact to L-aspartate. Carbamoyl phosphate-binding residues include Arg-104, His-132, and Gln-135. Residues Arg-165 and Arg-217 each contribute to the L-aspartate site. 2 residues coordinate carbamoyl phosphate: Gly-257 and Pro-258.

It belongs to the aspartate/ornithine carbamoyltransferase superfamily. ATCase family. Heterododecamer (2C3:3R2) of six catalytic PyrB chains organized as two trimers (C3), and six regulatory PyrI chains organized as three dimers (R2).

It carries out the reaction carbamoyl phosphate + L-aspartate = N-carbamoyl-L-aspartate + phosphate + H(+). It participates in pyrimidine metabolism; UMP biosynthesis via de novo pathway; (S)-dihydroorotate from bicarbonate: step 2/3. Catalyzes the condensation of carbamoyl phosphate and aspartate to form carbamoyl aspartate and inorganic phosphate, the committed step in the de novo pyrimidine nucleotide biosynthesis pathway. The polypeptide is Aspartate carbamoyltransferase catalytic subunit (Thermus aquaticus).